Consider the following 452-residue polypeptide: tRNA modification GTPase MnmE (452 aa).

The (6S)-5-formyl-5,6,7,8-tetrahydrofolate site is built by arginine 24, glutamate 81, and arginine 120. The region spanning 216-373 is the TrmE-type G domain; sequence GIKTVIVGAP…LFGAIGRWAD (158 aa). GTP is bound by residues 226–231, 245–251, and 270–273; these read NVGKSS, SAEPGTT, and DTAG. Residues serine 230 and threonine 251 each contribute to the Mg(2+) site. Lysine 452 lines the (6S)-5-formyl-5,6,7,8-tetrahydrofolate pocket.

Belongs to the TRAFAC class TrmE-Era-EngA-EngB-Septin-like GTPase superfamily. TrmE GTPase family. As to quaternary structure, homodimer. Heterotetramer of two MnmE and two MnmG subunits. It depends on K(+) as a cofactor.

It localises to the cytoplasm. Its function is as follows. Exhibits a very high intrinsic GTPase hydrolysis rate. Involved in the addition of a carboxymethylaminomethyl (cmnm) group at the wobble position (U34) of certain tRNAs, forming tRNA-cmnm(5)s(2)U34. The protein is tRNA modification GTPase MnmE of Opitutus terrae (strain DSM 11246 / JCM 15787 / PB90-1).